The following is a 213-amino-acid chain: Orotate phosphoribosyltransferase (213 aa).

Position 26 (K26) interacts with 5-phospho-alpha-D-ribose 1-diphosphate. An orotate-binding site is contributed by 34-35; sequence FF. 5-phospho-alpha-D-ribose 1-diphosphate-binding positions include 72–73, R99, K100, K103, H105, and 124–132; these read YK and DDVITAGTA. The orotate site is built by T128 and R156.

It belongs to the purine/pyrimidine phosphoribosyltransferase family. PyrE subfamily. In terms of assembly, homodimer. Requires Mg(2+) as cofactor.

It carries out the reaction orotidine 5'-phosphate + diphosphate = orotate + 5-phospho-alpha-D-ribose 1-diphosphate. It functions in the pathway pyrimidine metabolism; UMP biosynthesis via de novo pathway; UMP from orotate: step 1/2. In terms of biological role, catalyzes the transfer of a ribosyl phosphate group from 5-phosphoribose 1-diphosphate to orotate, leading to the formation of orotidine monophosphate (OMP). This is Orotate phosphoribosyltransferase from Edwardsiella ictaluri (strain 93-146).